A 370-amino-acid chain; its full sequence is 3-isopropylmalate dehydrogenase (370 aa).

77–90 (GPKWDSVPYEVRPE) lines the NAD(+) pocket. Substrate is bound by residues Arg-97, Arg-107, Arg-135, and Asp-226. Asp-226, Asp-250, and Asp-254 together coordinate Mg(2+). An NAD(+)-binding site is contributed by 290-302 (GSAPDIAGQGLAN).

Belongs to the isocitrate and isopropylmalate dehydrogenases family. LeuB type 1 subfamily. As to quaternary structure, homodimer. Mg(2+) serves as cofactor. The cofactor is Mn(2+).

The protein localises to the cytoplasm. It catalyses the reaction (2R,3S)-3-isopropylmalate + NAD(+) = 4-methyl-2-oxopentanoate + CO2 + NADH. The protein operates within amino-acid biosynthesis; L-leucine biosynthesis; L-leucine from 3-methyl-2-oxobutanoate: step 3/4. Its function is as follows. Catalyzes the oxidation of 3-carboxy-2-hydroxy-4-methylpentanoate (3-isopropylmalate) to 3-carboxy-4-methyl-2-oxopentanoate. The product decarboxylates to 4-methyl-2 oxopentanoate. The sequence is that of 3-isopropylmalate dehydrogenase from Nitrobacter winogradskyi (strain ATCC 25391 / DSM 10237 / CIP 104748 / NCIMB 11846 / Nb-255).